Consider the following 258-residue polypeptide: Kallikrein-1 (258 aa).

The N-terminal stretch at Met-1–Ala-18 is a signal peptide. A propeptide spans Pro-19–Arg-24 (activation peptide). In terms of domain architecture, Peptidase S1 spans Ile-25–Ala-255. Intrachain disulfides connect Cys-31/Cys-170, Cys-47/Cys-63, Cys-149/Cys-216, Cys-181/Cys-195, and Cys-206/Cys-231. His-62 (charge relay system) is an active-site residue. A glycan (O-linked (GalNAc...) serine) is linked at Ser-90. Asn-99 carries an N-linked (GlcNAc...) asparagine glycan. Ser-101 carries O-linked (GalNAc...) serine glycosylation. Residue Asn-105 is glycosylated (N-linked (GlcNAc...) asparagine). Catalysis depends on Asp-117, which acts as the Charge relay system. Asn-161 is a glycosylation site (N-linked (GlcNAc...) asparagine). Residue Ser-163 is glycosylated (O-linked (GalNAc...) serine). Ser-210 (charge relay system) is an active-site residue.

It belongs to the peptidase S1 family. Kallikrein subfamily.

It catalyses the reaction Preferential cleavage of Arg-|-Xaa bonds in small molecule substrates. Highly selective action to release kallidin (lysyl-bradykinin) from kininogen involves hydrolysis of Met-|-Xaa or Leu-|-Xaa.. Glandular kallikreins cleave Met-Lys and Arg-Ser bonds in kininogen to release Lys-bradykinin. The sequence is that of Kallikrein-1 (KLK1) from Papio hamadryas (Hamadryas baboon).